Reading from the N-terminus, the 298-residue chain is Cell wall protein DAN1 (298 aa).

The signal sequence occupies residues 1-19 (MSRISILAVAAALVASATA). A disordered region spans residues 122 to 168 (PASTTEASSTSTSEASSAATESSSSSESSAETSSNAASTQATVSSES). The GPI-anchor amidated asparagine moiety is linked to residue asparagine 275. The propeptide at 276-298 (GANKFNNGVFGAAAIAGAAALLL) is removed in mature form.

This sequence belongs to the SRP1/TIP1 family. Post-translationally, extensively O-glycosylated. The GPI-anchor is attached to the protein in the endoplasmic reticulum and serves to target the protein to the cell surface. There, the glucosamine-inositol phospholipid moiety is cleaved off and the GPI-modified mannoprotein is covalently attached via its lipidless GPI glycan remnant to the 1,6-beta-glucan of the outer cell wall layer.

Its subcellular location is the secreted. It is found in the cell wall. It localises to the membrane. Functionally, component of the cell wall. This Saccharomyces cerevisiae (strain ATCC 204508 / S288c) (Baker's yeast) protein is Cell wall protein DAN1 (DAN1).